The sequence spans 446 residues: Protein IQ-DOMAIN 19 (446 aa).

The disordered stretch occupies residues 93–140 (IPGTPKEKRRWSFRRSSATGPPPPACAITLKDSPPPPPPPPPPPPLQQ). Pro residues predominate over residues 125–139 (SPPPPPPPPPPPPLQ). IQ domains are found at residues 163–191 (EEFA…GLVK) and 192–214 (LQAL…CMQA). The segment at 214 to 231 (ALITLQAKAREQRIRMIG) is calmodulin-binding. Residues 332–345 (QSSKAKARSQSAPK) are compositionally biased toward low complexity. The segment at 332–398 (QSSKAKARSQ…TAKESQQHHH (67 aa)) is disordered. Over residues 379 to 392 (QRSSSQLGSNTAKE) the composition is skewed to polar residues.

Belongs to the IQD family. Binds to multiple calmodulin (CaM) in the presence of Ca(2+) and CaM-like proteins.

It localises to the cytoplasm. The protein resides in the cytoskeleton. It is found in the cell membrane. Functionally, may be involved in cooperative interactions with calmodulins or calmodulin-like proteins. Recruits calmodulin proteins to microtubules, thus being a potential scaffold in cellular signaling and trafficking. Acts as a positive regulator of trichome branch initiation. May associate with nucleic acids and regulate gene expression at the transcriptional or post-transcriptional level. The polypeptide is Protein IQ-DOMAIN 19 (Arabidopsis thaliana (Mouse-ear cress)).